The chain runs to 283 residues: Undecaprenyl-diphosphatase (283 aa).

The next 7 membrane-spanning stretches (helical) occupy residues 1–21, 40–60, 85–105, 117–137, 196–216, 232–252, and 258–278; these read MDIIQAIVLGIIQGLTEFLPI, GAAFTAIIQIGTLAAVLIYFY, SRMGWMISAGTIPIVVLGLLF, YIISGSLILLALVLMYAEYLV, FSFLLSLPAVFAAGVYQLLKV, VATVVSGVIGYASIAFLLDYL, and YLFIIYRILLGVFLLAMLSMG.

The protein belongs to the UppP family.

The protein resides in the cell inner membrane. The enzyme catalyses di-trans,octa-cis-undecaprenyl diphosphate + H2O = di-trans,octa-cis-undecaprenyl phosphate + phosphate + H(+). Catalyzes the dephosphorylation of undecaprenyl diphosphate (UPP). Confers resistance to bacitracin. In Chloroherpeton thalassium (strain ATCC 35110 / GB-78), this protein is Undecaprenyl-diphosphatase.